A 151-amino-acid chain; its full sequence is Inactive oocyte-specific homeobox protein 2 (151 aa).

Residues 1 to 97 form a disordered region; the sequence is MAEGPSLHPK…PMASRKFRKE (97 aa). The segment covering 37-54 has biased composition (polar residues); it reads MRQSPLVTPGSTTKSSLS.

The protein belongs to the paired homeobox family. Obox subfamily. In terms of tissue distribution, specifically expressed in oocytes and early embryos.

Its function is as follows. In contrast to other Obox family proteins, displays a truncated homeobox domain and does not bind DNA. The protein is Inactive oocyte-specific homeobox protein 2 of Mus musculus (Mouse).